Here is a 210-residue protein sequence, read N- to C-terminus: Nta operon transcriptional regulator (210 aa).

The region spanning 1–55 (MAVSYHFRPGERINEVELAAQLKVSRTPLREALNRLTTEGFLTTTANKGFFARVL) is the HTH gntR-type domain. A DNA-binding region (H-T-H motif) is located at residues 15-34 (EVELAAQLKVSRTPLREALN).

Probable regulator for the expression of the NTA monooxygenase subunits. This is Nta operon transcriptional regulator (ntaR) from Aminobacter aminovorans (Chelatobacter heintzii).